A 204-amino-acid chain; its full sequence is Probable nicotinate-nucleotide adenylyltransferase (204 aa).

Belongs to the NadD family.

It catalyses the reaction nicotinate beta-D-ribonucleotide + ATP + H(+) = deamido-NAD(+) + diphosphate. The protein operates within cofactor biosynthesis; NAD(+) biosynthesis; deamido-NAD(+) from nicotinate D-ribonucleotide: step 1/1. Its function is as follows. Catalyzes the reversible adenylation of nicotinate mononucleotide (NaMN) to nicotinic acid adenine dinucleotide (NaAD). This chain is Probable nicotinate-nucleotide adenylyltransferase, found in Clostridium beijerinckii (strain ATCC 51743 / NCIMB 8052) (Clostridium acetobutylicum).